The chain runs to 84 residues: Figainin 2 (84 aa).

An N-terminal signal peptide occupies residues 1 to 22 (MAFLKKSLFLVLFLGIVSLSVC). Basic and acidic residues predominate over residues 23–39 (EEEKREGEEKEEKREEE). Positions 23–53 (EEEKREGEEKEEKREEEEGKEENEDGNEEHK) are disordered. Positions 23–54 (EEEKREGEEKEEKREEEEGKEENEDGNEEHKE) are excised as a propeptide. Positions 40-49 (EGKEENEDGN) are enriched in acidic residues.

In terms of tissue distribution, expressed by the skin glands.

It is found in the secreted. In terms of biological role, antimicrobial peptide that displays antibacterial, antiprotozoal, and antiviral activity. Exhibits antibacterial activity against the Gram-positive bacteria S.epidermidis ATCC 12228 (MIC=4 uM), E.casseliflavus ATCC 700327 (MIC=4 uM), S.aureus ATCC 25923 (MIC=8 uM) and E.faecalis ATCC 29212 (MIC=8 uM), and the Gram-negative bacteria E.coli ATCC 25922 (MIC=8 uM), K.pneumoniae ATCC 13883 (MIC=8 uM), the multi-resistant clinical isolate strain K.pneumoniae carbapanemase (KPC) MR (MIC=16 uM), and P.aeruginosa ATCC 27853 (MIC=32 uM). Displays antiprotozoal activity against the epimastigote form of T.cruzi (IC(50)=6.32 uM). Does not show antimicrobial against the fungi C.albicans ATCC 90028 and C.parapsilosis ATCC 22019. Displays antiviral activity against the human viruses chikungunya (EC(50)=17.9 uM), Dengue serotype 4 (EC(50)=20.8 uM) and Yellow Fever (EC(50)=21.8 uM). Shows moderate cytolytic activity against human erythrocytes (HC(50)=48.9 uM), and activates the oxidative burst in human neutrophils. Also displays anti-proliferative effects against MCF-7 breast cancer cells (IC(50)=15.3 uM) and B16F10 murine melanoma cells (IC(50)=12.8 uM). This is Figainin 2 from Boana raniceps (Chaco tree frog).